A 287-amino-acid polypeptide reads, in one-letter code: Neuferricin homolog (287 aa).

An N-terminal signal peptide occupies residues 1 to 22; that stretch reads MFGLLRHLFKFQFLFVVAAVLG. The Cytochrome b5 heme-binding domain occupies 61–146; sequence GTLFTPAELA…KPDDLIGLAG (86 aa). A coiled-coil region spans residues 175–204; that stretch reads YHHKFLELLEQARDAKRQVEELRARYPGCN.

This sequence belongs to the cytochrome b5 family. MAPR subfamily.

It localises to the secreted. Functionally, heme-binding protein. This is Neuferricin homolog from Drosophila melanogaster (Fruit fly).